The chain runs to 247 residues: ATP synthase subunit a (247 aa).

6 helical membrane passes run 24–44 (IAFTNSSAYMFLAVALTSLLM), 82–102 (FFPFVFSIFMLVTVSNLVGII), 112–132 (IIVTAALAFLVFFTVLIYGFY), 141–161 (LFVPSGIPVVILPLVVTIEVI), 194–214 (MLGAMGIVGVFGAVLPLALVV), and 219–239 (LELLVAFLQAYVFTILTCIYI).

The protein belongs to the ATPase A chain family. As to quaternary structure, F-type ATPases have 2 components, CF(1) - the catalytic core - and CF(0) - the membrane proton channel. CF(1) has five subunits: alpha(3), beta(3), gamma(1), delta(1), epsilon(1). CF(0) has three main subunits: a(1), b(2) and c(9-12). The alpha and beta chains form an alternating ring which encloses part of the gamma chain. CF(1) is attached to CF(0) by a central stalk formed by the gamma and epsilon chains, while a peripheral stalk is formed by the delta and b chains.

It localises to the cell inner membrane. In terms of biological role, key component of the proton channel; it plays a direct role in the translocation of protons across the membrane. In Nitrobacter winogradskyi (strain ATCC 25391 / DSM 10237 / CIP 104748 / NCIMB 11846 / Nb-255), this protein is ATP synthase subunit a.